A 328-amino-acid polypeptide reads, in one-letter code: DNA-directed RNA polymerase subunit alpha 1 (328 aa).

Positions 1–234 (MQGFVKDFLK…GQLDEFVDER (234 aa)) are alpha N-terminal domain (alpha-NTD). The alpha C-terminal domain (alpha-CTD) stretch occupies residues 248-328 (FDPILLRPVN…NWPPASLIED (81 aa)).

It belongs to the RNA polymerase alpha chain family. In terms of assembly, homodimer. The RNAP catalytic core consists of 2 alpha, 1 beta, 1 beta' and 1 omega subunit. When a sigma factor is associated with the core the holoenzyme is formed, which can initiate transcription.

The enzyme catalyses RNA(n) + a ribonucleoside 5'-triphosphate = RNA(n+1) + diphosphate. Its function is as follows. DNA-dependent RNA polymerase catalyzes the transcription of DNA into RNA using the four ribonucleoside triphosphates as substrates. This chain is DNA-directed RNA polymerase subunit alpha 1, found in Psychromonas ingrahamii (strain DSM 17664 / CCUG 51855 / 37).